Reading from the N-terminus, the 603-residue chain is Sorting nexin-41 (603 aa).

Residues 1–36 (MNSFRESDEEDNNPFSGTNHLYASGIGAVPEGDDDF) are disordered. The 121-residue stretch at 121-241 (AEGSLGALRI…QKFLNPEYIW (121 aa)) folds into the PX domain. 4 residues coordinate a 1,2-diacyl-sn-glycero-3-phospho-(1D-myo-inositol-3-phosphate): arginine 159, serine 161, lysine 185, and arginine 208.

This sequence belongs to the sorting nexin family.

Its subcellular location is the endosome membrane. It localises to the endomembrane system. May be required for cytoplasm to vacuole transport (Cvt) and pexophagy. The polypeptide is Sorting nexin-41 (SNX41) (Eremothecium gossypii (strain ATCC 10895 / CBS 109.51 / FGSC 9923 / NRRL Y-1056) (Yeast)).